The chain runs to 795 residues: MKFSELWLREWVNPAISSDALSEQITMAGLEVDGVEPVAGAFHGVVVGEVVECAQHPNADKLRVTKVNVGGDRLLDIVCGAPNCRQGLKVAVATVGAVLPGDFKIKAAKLRGEPSEGMLCSFSELGISDDHSGIIELPADAPLGTDIREYLKLDDNTIEISVTPNRADCLGILGVARDVAVLNELALTAPATEPVTATIADRFPIQVDATEACPRYLGRVVKGINVKAATPLWMREKLRRCGIRSIDPVVDVTNYVLLELGQPMHAFDLNRLEGGIVVRMAKEGETLRLLDGTDATLSADTLVIADHQKALAMGGIFGGEHSGVNGETQDVLLECAYFNPLSITGRARRYGLHTDASHRYERGVDPALQHQAMERATRLLLDICGGEAGPVVEAVSEKDLPARATIALRRDKLDRLIGHVISDEKVSDILNRLGCQVTQTADGWQAVAPSWRFDMAIEEDLVEEVARVYGYNNIPNIPTQAPLKMTQHREADLALKRVKTLLVDHGFQEAITYSFVDPKIQSLIHPGEDALILPSPISVEMSAMRLSLWSGLLGAVVHNQNRQQSRLRLFESGLRFVPDQRADLGVRQETMLAGVITGTRYEEHWDLARQAVDFYDLKGDLEAVLALTGKLSVLEFRAESHPALHPGQTAAIYLAGERIGYIGVIHPELERKLDLNGRTVVFEVLWDKLAERVVPEAADISRFPANRRDIAVVVAESVPAGDVLAECKKVGANQLVGVNLFDVYRGKGVAEGYKSLAISLVLQDTARTLAEEEIAATVAQCVAALKQRFQASLRD.

One can recognise a tRNA-binding domain in the interval 39–148 (AGAFHGVVVG…ADAPLGTDIR (110 aa)). Residues 401-476 (PARATIALRR…RVYGYNNIPN (76 aa)) enclose the B5 domain. The Mg(2+) site is built by D454, D460, E463, and E464. Positions 701–794 (SRFPANRRDI…LKQRFQASLR (94 aa)) constitute an FDX-ACB domain.

It belongs to the phenylalanyl-tRNA synthetase beta subunit family. Type 1 subfamily. In terms of assembly, tetramer of two alpha and two beta subunits. It depends on Mg(2+) as a cofactor.

The protein resides in the cytoplasm. The enzyme catalyses tRNA(Phe) + L-phenylalanine + ATP = L-phenylalanyl-tRNA(Phe) + AMP + diphosphate + H(+). The polypeptide is Phenylalanine--tRNA ligase beta subunit (pheT) (Dickeya dadantii (strain 3937) (Erwinia chrysanthemi (strain 3937))).